The chain runs to 135 residues: MTMTDPIADMLTRVRNANRAYHDRVVMPHSKIKTHIAEILQQEGYILGWHVEDPAEGAVGRTLIVDLKYGPNRERSIAGVKRISKPGLRVYAKSTNLPKVLGGLGVAIISTSSGLLTDRQAGKRRVGGEVLAYVW.

This sequence belongs to the universal ribosomal protein uS8 family. Part of the 30S ribosomal subunit. Contacts proteins S5 and S12.

In terms of biological role, one of the primary rRNA binding proteins, it binds directly to 16S rRNA central domain where it helps coordinate assembly of the platform of the 30S subunit. This chain is Small ribosomal subunit protein uS8, found in Parafrankia sp. (strain EAN1pec).